We begin with the raw amino-acid sequence, 595 residues long: Elongation factor 4 2 (595 aa).

Positions 4–187 (SHIRNFAIIA…AIKQRLPAPQ (184 aa)) constitute a tr-type G domain. Residues 16–21 (DHGKST) and 133–136 (NKVD) each bind GTP.

This sequence belongs to the TRAFAC class translation factor GTPase superfamily. Classic translation factor GTPase family. LepA subfamily.

It localises to the cell membrane. It carries out the reaction GTP + H2O = GDP + phosphate + H(+). In terms of biological role, required for accurate and efficient protein synthesis under certain stress conditions. May act as a fidelity factor of the translation reaction, by catalyzing a one-codon backward translocation of tRNAs on improperly translocated ribosomes. Back-translocation proceeds from a post-translocation (POST) complex to a pre-translocation (PRE) complex, thus giving elongation factor G a second chance to translocate the tRNAs correctly. Binds to ribosomes in a GTP-dependent manner. This is Elongation factor 4 2 from Lactiplantibacillus plantarum (strain ATCC BAA-793 / NCIMB 8826 / WCFS1) (Lactobacillus plantarum).